We begin with the raw amino-acid sequence, 269 residues long: Shikimate dehydrogenase (NADP(+)) (269 aa).

Shikimate is bound by residues 17-19 (SKS) and T64. The active-site Proton acceptor is K68. E80 is an NADP(+) binding site. Positions 89 and 105 each coordinate shikimate. Residues 130 to 134 (GAGGA), 154 to 159 (NRTHTK), and M213 contribute to the NADP(+) site. Y215 is a shikimate binding site. An NADP(+)-binding site is contributed by G237.

The protein belongs to the shikimate dehydrogenase family. In terms of assembly, homodimer.

The catalysed reaction is shikimate + NADP(+) = 3-dehydroshikimate + NADPH + H(+). It functions in the pathway metabolic intermediate biosynthesis; chorismate biosynthesis; chorismate from D-erythrose 4-phosphate and phosphoenolpyruvate: step 4/7. Functionally, involved in the biosynthesis of the chorismate, which leads to the biosynthesis of aromatic amino acids. Catalyzes the reversible NADPH linked reduction of 3-dehydroshikimate (DHSA) to yield shikimate (SA). The chain is Shikimate dehydrogenase (NADP(+)) from Neisseria mucosa.